We begin with the raw amino-acid sequence, 101 residues long: Small ribosomal subunit protein uS14 (101 aa).

A disordered region spans residues 1 to 24 (MAKVSSIKKNEKRKKLSQSLHNKR). The segment covering 10–24 (NEKRKKLSQSLHNKR) has biased composition (basic residues).

This sequence belongs to the universal ribosomal protein uS14 family. As to quaternary structure, part of the 30S ribosomal subunit. Contacts proteins S3 and S10.

In terms of biological role, binds 16S rRNA, required for the assembly of 30S particles and may also be responsible for determining the conformation of the 16S rRNA at the A site. In Rickettsia bellii (strain OSU 85-389), this protein is Small ribosomal subunit protein uS14.